The following is a 421-amino-acid chain: C2H2 type master regulator of conidiophore development brlA (421 aa).

2 C2H2-type zinc fingers span residues 309-333 and 339-364; these read FKCK…MKSH and HVCW…TKTH. Residues 379–421 are disordered; that stretch reads ESSPDYDPDFRGQLTPDGLPIRGSTLDDPMPNSREYSVDGLDD.

The protein localises to the nucleus. In terms of biological role, brlA, abaA and wetA are pivotal regulators of conidiophore development and conidium maturation. They act individually and together to regulate their own expression and that of numerous other sporulation-specific genes. Binds promoters of target genes at brlA response elements (BREs) containing the conserved sequence 5'-(C/A)(A/G)AGGG(G/A)-3'. Required for conidiophores formation. Controls expression of abaA. The polypeptide is C2H2 type master regulator of conidiophore development brlA (Aspergillus oryzae (strain ATCC 42149 / RIB 40) (Yellow koji mold)).